Consider the following 450-residue polypeptide: tRNA-2-methylthio-N(6)-dimethylallyladenosine synthase (450 aa).

An MTTase N-terminal domain is found at 14-132 (GEFFIETWGC…FPNYLNEVKK (119 aa)). The [4Fe-4S] cluster site is built by cysteine 23, cysteine 59, cysteine 93, cysteine 169, cysteine 173, and cysteine 176. A Radical SAM core domain is found at 155 to 385 (RKNSMKAFVT…VEVVNEISAK (231 aa)). The 63-residue stretch at 388 to 450 (KAYEGKIEEV…NSFSLTGEEI (63 aa)) folds into the TRAM domain.

Belongs to the methylthiotransferase family. MiaB subfamily. In terms of assembly, monomer. The cofactor is [4Fe-4S] cluster.

The protein localises to the cytoplasm. The enzyme catalyses N(6)-dimethylallyladenosine(37) in tRNA + (sulfur carrier)-SH + AH2 + 2 S-adenosyl-L-methionine = 2-methylsulfanyl-N(6)-dimethylallyladenosine(37) in tRNA + (sulfur carrier)-H + 5'-deoxyadenosine + L-methionine + A + S-adenosyl-L-homocysteine + 2 H(+). Catalyzes the methylthiolation of N6-(dimethylallyl)adenosine (i(6)A), leading to the formation of 2-methylthio-N6-(dimethylallyl)adenosine (ms(2)i(6)A) at position 37 in tRNAs that read codons beginning with uridine. This is tRNA-2-methylthio-N(6)-dimethylallyladenosine synthase from Clostridium botulinum (strain Langeland / NCTC 10281 / Type F).